We begin with the raw amino-acid sequence, 548 residues long: MPVIRVRRERLESLTGLSIGELEELLFRLKCEVEEPEEGVLEVEVNPDRPDMYIGEGIARAVKGIAGVEEGWDPPELADTPLSLRVERVPQRPYIAAAVVYGVNVDELFLEELIQFQEKLHDSLGRRRAKIAIGFHDLAKLPSASVEYRLMTLDTRMKPLGYGGSEMSFREFLLADEKGSLYGGLATKDNSHPFLLSGGEVIAAPPVINSEITRVEPGTRDLFIDVTGTSAELVAKTLDIIVASLAEREGARVGRVRLEGPGAVWASTPLLSEAAAKLDPGTVSKALGVDLTPEEAALHLRRMRHNASPAGGLVNVRVPPFRVDILGEVDLVEDIAISIGYEALGPRWPGKFHGGSLRWETHVYRAVKDLLVGLGFTEVLQLVLTSPRLVEAAGFSSMAVEVLNPVQQEYSVLRPTLLITLLQTLRENQHRRKPVKVFEAGNAVYLEDGEPRDEEKLALGVLDEEAGFEDVQAPLYAVLRIMGVDFEVEEASHPMFMEGRTAAVKVGGERLGYIGEVKPEVLEAFGLEYPVAAAEISLEVLARWTSRT.

The B5 domain maps to L271–P346. 4 residues coordinate Mg(2+): D324, D330, E333, and D334.

It belongs to the phenylalanyl-tRNA synthetase beta subunit family. Type 2 subfamily. Tetramer of two alpha and two beta subunits. The cofactor is Mg(2+).

Its subcellular location is the cytoplasm. The enzyme catalyses tRNA(Phe) + L-phenylalanine + ATP = L-phenylalanyl-tRNA(Phe) + AMP + diphosphate + H(+). This is Phenylalanine--tRNA ligase beta subunit from Aeropyrum pernix (strain ATCC 700893 / DSM 11879 / JCM 9820 / NBRC 100138 / K1).